Here is a 299-residue protein sequence, read N- to C-terminus: Lipoyl synthase 2 (299 aa).

[4Fe-4S] cluster-binding residues include Cys45, Cys50, Cys56, Cys71, Cys75, Cys78, and Ser295. The Radical SAM core domain maps to 57–284; it reads YASGTATFLL…KSFCSKLGFK (228 aa).

This sequence belongs to the radical SAM superfamily. Lipoyl synthase family. The cofactor is [4Fe-4S] cluster.

It is found in the cytoplasm. It catalyses the reaction [[Fe-S] cluster scaffold protein carrying a second [4Fe-4S](2+) cluster] + N(6)-octanoyl-L-lysyl-[protein] + 2 oxidized [2Fe-2S]-[ferredoxin] + 2 S-adenosyl-L-methionine + 4 H(+) = [[Fe-S] cluster scaffold protein] + N(6)-[(R)-dihydrolipoyl]-L-lysyl-[protein] + 4 Fe(3+) + 2 hydrogen sulfide + 2 5'-deoxyadenosine + 2 L-methionine + 2 reduced [2Fe-2S]-[ferredoxin]. It functions in the pathway protein modification; protein lipoylation via endogenous pathway; protein N(6)-(lipoyl)lysine from octanoyl-[acyl-carrier-protein]: step 2/2. In terms of biological role, catalyzes the radical-mediated insertion of two sulfur atoms into the C-6 and C-8 positions of the octanoyl moiety bound to the lipoyl domains of lipoate-dependent enzymes, thereby converting the octanoylated domains into lipoylated derivatives. The sequence is that of Lipoyl synthase 2 from Prochlorococcus marinus subsp. pastoris (strain CCMP1986 / NIES-2087 / MED4).